The sequence spans 489 residues: Ribulose-1,5 bisphosphate carboxylase/oxygenase large subunit N-methyltransferase, chloroplastic (489 aa).

The transit peptide at 1–37 (MATIFSGGSVSPFLFHTNKGTSFTPKAPILHLKRSFS) directs the protein to the chloroplast. One can recognise an SET domain in the interval 64 to 288 (EGVITAKTPV…AGEQVYIQYD (225 aa)). S-adenosyl-L-methionine-binding positions include 80 to 82 (EGL) and arginine 222. Substrate-binding residues include arginine 222, arginine 226, and aspartate 239. 242–243 (NH) serves as a coordination point for S-adenosyl-L-methionine. Substrate is bound by residues tyrosine 254, tyrosine 287, and tyrosine 300.

It belongs to the class V-like SAM-binding methyltransferase superfamily. Plant protein-lysine LSMT methyltransferase family. In terms of assembly, homotrimer. Highly expressed in leaf.

The protein localises to the plastid. It localises to the chloroplast. The catalysed reaction is L-lysyl-[ribulose-1,5-bisphosphate carboxylase] + 3 S-adenosyl-L-methionine = N(6),N(6),N(6)-trimethyl-L-lysyl-[ribulose-1,5-bisphosphate carboxylase] + 3 S-adenosyl-L-homocysteine + 3 H(+). It catalyses the reaction [fructose-bisphosphate aldolase]-L-lysine + 3 S-adenosyl-L-methionine = [fructose-bisphosphate aldolase]-N(6),N(6),N(6)-trimethyl-L-lysine + 3 S-adenosyl-L-homocysteine + 3 H(+). Methylates 'Lys-14' of the large subunit of RuBisCO. Can also use with lower efficiency chloroplastic fructose-bisphosphate aldolases and gamma-tocopherol methyltransferase as substrates, but not a cytosolic aldolase. The sequence is that of Ribulose-1,5 bisphosphate carboxylase/oxygenase large subunit N-methyltransferase, chloroplastic (RBCMT) from Pisum sativum (Garden pea).